The sequence spans 355 residues: Uroporphyrinogen decarboxylase (355 aa).

Residues 27–31 (RQAGR), Asp77, Tyr154, Thr209, and His327 each bind substrate.

This sequence belongs to the uroporphyrinogen decarboxylase family. As to quaternary structure, homodimer.

Its subcellular location is the cytoplasm. It catalyses the reaction uroporphyrinogen III + 4 H(+) = coproporphyrinogen III + 4 CO2. It participates in porphyrin-containing compound metabolism; protoporphyrin-IX biosynthesis; coproporphyrinogen-III from 5-aminolevulinate: step 4/4. Catalyzes the decarboxylation of four acetate groups of uroporphyrinogen-III to yield coproporphyrinogen-III. The chain is Uroporphyrinogen decarboxylase from Aeromonas salmonicida (strain A449).